Consider the following 471-residue polypeptide: Adenosylhomocysteinase (471 aa).

The substrate site is built by Thr60, Asp135, and Glu196. 197-199 (TTT) lines the NAD(+) pocket. Substrate is bound by residues Lys226 and Asp230. NAD(+)-binding positions include Asn231, 260–265 (GYGDVG), Glu283, Asn318, 339–341 (IGH), and Asn387.

This sequence belongs to the adenosylhomocysteinase family. Requires NAD(+) as cofactor.

Its subcellular location is the cytoplasm. The catalysed reaction is S-adenosyl-L-homocysteine + H2O = L-homocysteine + adenosine. It functions in the pathway amino-acid biosynthesis; L-homocysteine biosynthesis; L-homocysteine from S-adenosyl-L-homocysteine: step 1/1. May play a key role in the regulation of the intracellular concentration of adenosylhomocysteine. The polypeptide is Adenosylhomocysteinase (Chlorobaculum tepidum (strain ATCC 49652 / DSM 12025 / NBRC 103806 / TLS) (Chlorobium tepidum)).